The following is a 383-amino-acid chain: UDP-N-acetylglucosamine--N-acetylmuramyl-(pentapeptide) pyrophosphoryl-undecaprenol N-acetylglucosamine transferase (383 aa).

Residues Thr11 to Gly13, Asn125, Arg166, Ser191, Ile246, and Gln291 each bind UDP-N-acetyl-alpha-D-glucosamine. Positions Pro364–Ser383 are disordered. Residues Gly366 to Ser383 are compositionally biased toward basic and acidic residues.

The protein belongs to the glycosyltransferase 28 family. MurG subfamily.

It is found in the cell inner membrane. It carries out the reaction di-trans,octa-cis-undecaprenyl diphospho-N-acetyl-alpha-D-muramoyl-L-alanyl-D-glutamyl-meso-2,6-diaminopimeloyl-D-alanyl-D-alanine + UDP-N-acetyl-alpha-D-glucosamine = di-trans,octa-cis-undecaprenyl diphospho-[N-acetyl-alpha-D-glucosaminyl-(1-&gt;4)]-N-acetyl-alpha-D-muramoyl-L-alanyl-D-glutamyl-meso-2,6-diaminopimeloyl-D-alanyl-D-alanine + UDP + H(+). The protein operates within cell wall biogenesis; peptidoglycan biosynthesis. Functionally, cell wall formation. Catalyzes the transfer of a GlcNAc subunit on undecaprenyl-pyrophosphoryl-MurNAc-pentapeptide (lipid intermediate I) to form undecaprenyl-pyrophosphoryl-MurNAc-(pentapeptide)GlcNAc (lipid intermediate II). The chain is UDP-N-acetylglucosamine--N-acetylmuramyl-(pentapeptide) pyrophosphoryl-undecaprenol N-acetylglucosamine transferase from Myxococcus xanthus (strain DK1622).